The following is a 352-amino-acid chain: Putative histone-lysine N-methyltransferase ASHH4 (352 aa).

One can recognise an AWS domain in the interval 60 to 109 (DHGIFCSCSLDPGSSTLCGSDCNCGILLSSCSSSCKCSSECTNKPFQQRH). Residues 111 to 228 (KKMKLVQTEK…KGEQLTYDYQ (118 aa)) enclose the SET domain. Residues 234 to 250 (ADQDCYCGAVCCRKKLG) form the Post-SET domain.

Belongs to the class V-like SAM-binding methyltransferase superfamily. Histone-lysine methyltransferase family. SET2 subfamily.

It is found in the nucleus. It localises to the chromosome. The protein resides in the centromere. It carries out the reaction L-lysyl-[histone] + S-adenosyl-L-methionine = N(6)-methyl-L-lysyl-[histone] + S-adenosyl-L-homocysteine + H(+). Histone methyltransferase. The polypeptide is Putative histone-lysine N-methyltransferase ASHH4 (ASHH4) (Arabidopsis thaliana (Mouse-ear cress)).